Consider the following 491-residue polypeptide: Probable Xaa-Pro aminopeptidase An01g13040 (491 aa).

The Mn(2+) site is built by Asp-276, Asp-287, Glu-420, and Glu-459.

The protein belongs to the peptidase M24B family. Mn(2+) is required as a cofactor.

It catalyses the reaction Release of any N-terminal amino acid, including proline, that is linked to proline, even from a dipeptide or tripeptide.. In terms of biological role, catalyzes the removal of a penultimate prolyl residue from the N-termini of peptides. The polypeptide is Probable Xaa-Pro aminopeptidase An01g13040 (Aspergillus niger (strain ATCC MYA-4892 / CBS 513.88 / FGSC A1513)).